Here is a 124-residue protein sequence, read N- to C-terminus: Large ribosomal subunit protein uL18 (124 aa).

This sequence belongs to the universal ribosomal protein uL18 family. Part of the 50S ribosomal subunit; part of the 5S rRNA/L5/L18/L25 subcomplex. Contacts the 5S and 23S rRNAs.

Its function is as follows. This is one of the proteins that bind and probably mediate the attachment of the 5S RNA into the large ribosomal subunit, where it forms part of the central protuberance. The protein is Large ribosomal subunit protein uL18 of Orientia tsutsugamushi (strain Boryong) (Rickettsia tsutsugamushi).